The chain runs to 147 residues: 3-dehydroquinate dehydratase (147 aa).

Residue Y23 is the Proton acceptor of the active site. Substrate is bound by residues N75, H81, and D88. The active-site Proton donor is the H101. Substrate contacts are provided by residues 102 to 103 and R112; that span reads LS.

The protein belongs to the type-II 3-dehydroquinase family. Homododecamer.

It carries out the reaction 3-dehydroquinate = 3-dehydroshikimate + H2O. Its pathway is metabolic intermediate biosynthesis; chorismate biosynthesis; chorismate from D-erythrose 4-phosphate and phosphoenolpyruvate: step 3/7. Functionally, catalyzes a trans-dehydration via an enolate intermediate. This Hahella chejuensis (strain KCTC 2396) protein is 3-dehydroquinate dehydratase.